The sequence spans 202 residues: Alpha-1-acid glycoprotein (202 aa).

Positions 1-18 (MALLWALAVLSHLPLLDA) are cleaved as a signal peptide. N-linked (GlcNAc...) asparagine glycosylation is found at asparagine 34, asparagine 57, asparagine 94, asparagine 104, and asparagine 136. A disulfide bridge links cysteine 91 with cysteine 184.

It belongs to the calycin superfamily. Lipocalin family.

It is found in the secreted. Functionally, functions as a transport protein in the blood stream. Binds various ligands in the interior of its beta-barrel domain. Appears to function in modulating the activity of the immune system during the acute-phase reaction. The polypeptide is Alpha-1-acid glycoprotein (ORM1) (Bos taurus (Bovine)).